A 101-amino-acid polypeptide reads, in one-letter code: Protein S100-A7A (101 aa).

EF-hand domains lie at methionine 13–aspartate 48 and lysine 50–aspartate 85. Zn(2+) contacts are provided by histidine 18, glutamate 28, and glutamate 38. Aspartate 63 and asparagine 65 together coordinate Ca(2+). Position 66 (glutamate 66) interacts with Zn(2+). Ca(2+) is bound by residues aspartate 67, lysine 69, and glutamate 74. 2 residues coordinate Zn(2+): histidine 87 and histidine 91.

It belongs to the S-100 family. In terms of tissue distribution, overexpressed in psoriasis.

It is found in the cytoplasm. In terms of biological role, may be involved in epidermal differentiation and inflammation and might therefore be important for the pathogenesis of psoriasis and other diseases. The sequence is that of Protein S100-A7A (S100A7A) from Homo sapiens (Human).